Reading from the N-terminus, the 64-residue chain is Large ribosomal subunit protein bL33 (64 aa).

Basic and acidic residues predominate over residues 16–25 (EARTSSEPRR). The interval 16–41 (EARTSSEPRRSNGVSRYTTEKNKRNT) is disordered.

This sequence belongs to the bacterial ribosomal protein bL33 family.

The chain is Large ribosomal subunit protein bL33 from Prochlorococcus marinus subsp. pastoris (strain CCMP1986 / NIES-2087 / MED4).